We begin with the raw amino-acid sequence, 355 residues long: Probable low-specificity L-threonine aldolase 2 (355 aa).

K211 carries the post-translational modification N6-(pyridoxal phosphate)lysine.

The protein belongs to the threonine aldolase family. The cofactor is pyridoxal 5'-phosphate. In terms of tissue distribution, expressed in roots, leaf vasculature and flowers.

It catalyses the reaction L-threonine = acetaldehyde + glycine. The enzyme catalyses L-allo-threonine = acetaldehyde + glycine. The protein operates within amino-acid degradation; L-threonine degradation via aldolase pathway; acetaldehyde and glycine from L-threonine: step 1/1. Threonine aldolase involved in threonine degradation to glycine. May play a role in the removal of L-allo-threonine. The polypeptide is Probable low-specificity L-threonine aldolase 2 (THA2) (Arabidopsis thaliana (Mouse-ear cress)).